The chain runs to 500 residues: Probable betaine aldehyde dehydrogenase (500 aa).

249 to 254 contributes to the NAD(+) binding site; it reads GSLATG. Residue E271 is the Proton acceptor of the active site. Residue C305 is the Nucleophile of the active site.

The protein belongs to the aldehyde dehydrogenase family.

It catalyses the reaction betaine aldehyde + NAD(+) + H2O = glycine betaine + NADH + 2 H(+). It functions in the pathway amine and polyamine biosynthesis; betaine biosynthesis via choline pathway; betaine from betaine aldehyde: step 1/1. This Schizosaccharomyces pombe (strain 972 / ATCC 24843) (Fission yeast) protein is Probable betaine aldehyde dehydrogenase (meu8).